Reading from the N-terminus, the 309-residue chain is MPDLAHVIREISEEMAQRSDRGAVADYIPELARVDPDQFGMAVIDAEGQVFTGGDSETPFSIQSVSKVFTLTLALGMVGDRLWKRVGREPSGNPFNSIVQLERERGVPRNPFINAGAIAVTDVILSGHEPREALGEILRFMQFLAQDSGIIIDETVAASEKRTGFRNTALANYMKSFGVIDNPVDYTLGVYFHHCAIAMNCRQLARAGRFLAHNGVNPSTGHSVVSAERARRINAIMLTCGHYDGSGEFAYRVGLPGKSGVGGSILAIAPGKASIAVWSPGLDAAGNSHLGRIALERLTQRMGWSVFGA.

Substrate contacts are provided by Ser64, Asn114, Glu160, Asn167, Tyr191, Tyr243, and Val261.

The protein belongs to the glutaminase family. Homotetramer.

It carries out the reaction L-glutamine + H2O = L-glutamate + NH4(+). The sequence is that of Glutaminase from Methylobacterium radiotolerans (strain ATCC 27329 / DSM 1819 / JCM 2831 / NBRC 15690 / NCIMB 10815 / 0-1).